Here is a 319-residue protein sequence, read N- to C-terminus: MSGDTCLTAVCPASGAKPKTYSFKGGCLGNKYIRLNVGGCLYYTTVQVLTRHDTMLKAMFSGRMEVLTDKEGWILIDRCGKHFGSILNYLRDDTITLPKSRHEVKELMAEAKYYLIQGLVDKCQAALQDKNDTYEAVCNIPIITSPKEEEKLIESSAKPVVKLLYNRSNNKYSYTSNSDDNLLKNIELFDKLSLRFNGRVLFIKDVIGDEICCWSFYGQGRKLAEVCCTSIVYATEKKQTKVEFPEARIYEETLNVLLYETPRVPDNSLLEATSRTRSQASHSEDDEGFELRDRVRRIHVKRYSTYDDRQLGHQSAYRD.

One can recognise a BTB domain in the interval 31–99; sequence KYIRLNVGGC…LRDDTITLPK (69 aa).

It belongs to the BACURD family. As to quaternary structure, component of the BCR(TNFAIP1) E3 ubiquitin ligase complex, at least composed of cul3, tnfaip1/bacurd2 and rbx1.

Its subcellular location is the cytoplasm. The protein resides in the nucleus. It is found in the endosome. Its pathway is protein modification; protein ubiquitination. Its function is as follows. Substrate-specific adapter of a BCR (BTB-CUL3-RBX1) E3 ubiquitin-protein ligase complex involved in regulation of cytoskeleton structure. The BCR(TNFAIP1) E3 ubiquitin ligase complex mediates the ubiquitination of target proteins, leading to their degradation by the proteasome. This chain is BTB/POZ domain-containing adapter for CUL3-mediated RhoA degradation protein 2 (tnfaip1), found in Xenopus tropicalis (Western clawed frog).